Reading from the N-terminus, the 140-residue chain is MSITTHLDIVSAEHEIFSGVVELVVATGELGEIGITPGHAPLLTVLRPGEVRITLQGGTQDIYYVQGGMLEVQPHCVTILADVAERAEHLDEAAALAAKAKAEAAIASKGGDIDYSVAAAELARAVAQIRAIQKTRKKMK.

The protein belongs to the ATPase epsilon chain family. F-type ATPases have 2 components, CF(1) - the catalytic core - and CF(0) - the membrane proton channel. CF(1) has five subunits: alpha(3), beta(3), gamma(1), delta(1), epsilon(1). CF(0) has three main subunits: a, b and c.

It localises to the cell inner membrane. Functionally, produces ATP from ADP in the presence of a proton gradient across the membrane. This Legionella pneumophila (strain Lens) protein is ATP synthase epsilon chain.